Here is a 139-residue protein sequence, read N- to C-terminus: D-ribose pyranase (139 aa).

His-20 serves as the catalytic Proton donor. Substrate contacts are provided by residues Asp-28, His-106, and 128–130 (YAN).

It belongs to the RbsD / FucU family. RbsD subfamily. Homodecamer.

The protein resides in the cytoplasm. It carries out the reaction beta-D-ribopyranose = beta-D-ribofuranose. It functions in the pathway carbohydrate metabolism; D-ribose degradation; D-ribose 5-phosphate from beta-D-ribopyranose: step 1/2. Functionally, catalyzes the interconversion of beta-pyran and beta-furan forms of D-ribose. This Vibrio campbellii (strain ATCC BAA-1116) protein is D-ribose pyranase.